A 413-amino-acid polypeptide reads, in one-letter code: Cardiolipin synthase B (413 aa).

2 consecutive PLD phosphodiesterase domains span residues 108–135 (IFRRMHRKIVVIDDRIAFVGGINYSAEH) and 285–312 (RRRPLHGKVALMDDHWATVGSSNLDPLS). Residues His113, Lys115, Asp120, His290, Lys292, and Asp297 contribute to the active site. A disordered region spans residues 388 to 413 (AQVPPPAQPEMETQDRVDPENTGVKP).

It belongs to the phospholipase D family. Cardiolipin synthase subfamily. ClsB sub-subfamily.

The protein resides in the cell membrane. The enzyme catalyses 2 a 1,2-diacyl-sn-glycero-3-phospho-(1'-sn-glycerol) = a cardiolipin + glycerol. Functionally, catalyzes the phosphatidyl group transfer from one phosphatidylglycerol molecule to another to form cardiolipin (CL) (diphosphatidylglycerol) and glycerol. This chain is Cardiolipin synthase B, found in Salmonella typhimurium (strain LT2 / SGSC1412 / ATCC 700720).